A 137-amino-acid polypeptide reads, in one-letter code: ATP synthase epsilon chain (137 aa).

The protein belongs to the ATPase epsilon chain family. In terms of assembly, F-type ATPases have 2 components, CF(1) - the catalytic core - and CF(0) - the membrane proton channel. CF(1) has five subunits: alpha(3), beta(3), gamma(1), delta(1), epsilon(1). CF(0) has three main subunits: a, b and c.

Its subcellular location is the cell inner membrane. In terms of biological role, produces ATP from ADP in the presence of a proton gradient across the membrane. This Ruegeria sp. (strain TM1040) (Silicibacter sp.) protein is ATP synthase epsilon chain.